The sequence spans 44 residues: MTSNNSNQPITYPIFTVRWLSVHALGVPSVFFLGAIAAMQFIQR.

The chain crosses the membrane as a helical span at residues 19–35 (WLSVHALGVPSVFFLGA). Residue His-23 participates in heme binding.

Belongs to the PsbE/PsbF family. Heterodimer of an alpha subunit and a beta subunit. PSII is composed of 1 copy each of membrane proteins PsbA, PsbB, PsbC, PsbD, PsbE, PsbF, PsbH, PsbI, PsbJ, PsbK, PsbL, PsbM, PsbT, PsbX, PsbY, PsbZ, Psb30/Ycf12, peripheral proteins PsbO, CyanoQ (PsbQ), PsbU, PsbV and a large number of cofactors. It forms dimeric complexes. The cofactor is heme b.

The protein localises to the cellular thylakoid membrane. This b-type cytochrome is tightly associated with the reaction center of photosystem II (PSII). PSII is a light-driven water:plastoquinone oxidoreductase that uses light energy to abstract electrons from H(2)O, generating O(2) and a proton gradient subsequently used for ATP formation. It consists of a core antenna complex that captures photons, and an electron transfer chain that converts photonic excitation into a charge separation. The protein is Cytochrome b559 subunit beta of Synechococcus elongatus (strain ATCC 33912 / PCC 7942 / FACHB-805) (Anacystis nidulans R2).